Reading from the N-terminus, the 360-residue chain is UDP-arabinopyranose mutase 2 (360 aa).

Val-2 carries the post-translational modification N-acetylvaline. The DXD motif motif lies at 110–112; sequence DDD. N-linked (Glc...) arginine glycosylation occurs at Arg-158.

The protein belongs to the RGP family. As to quaternary structure, heteromers with RGP1, RGP4 and RGP5. Mn(2+) serves as cofactor. It depends on Mg(2+) as a cofactor. In terms of processing, reversibly glycosylated in vitro by UDP-glucose, UDP-xylose and UDP-galactose, but not UDP-mannose. As to expression, predominantly expressed in shoot and root apical meristems. Expressed in epidermal cells of leaves, inflorescence stems and seed coat. Expressed in pollen.

The protein localises to the cytoplasm. Its subcellular location is the cytosol. It is found in the golgi apparatus. The enzyme catalyses UDP-beta-L-arabinofuranose = UDP-beta-L-arabinopyranose. UDP-L-arabinose mutase involved in the biosynthesis of cell wall non-cellulosic polysaccharides. Catalyzes the interconvertion of UDP-L-arabinopyranose (UDP-Arap) and UDP-L-arabinofuranose (UDP-Araf) in vitro. Preferentially catalyzes the formation of UDP-Arap from UDP-Araf. At thermodynamic equilibrium in vitro the ratio of the pyranose form over the furanose form is 95:5. Is not active on other UDP-sugars (UDP-Gal, UDP-Xyl, UDP-Glc, GDP-Man and GDP-Fuc). Functions redundantly with RGP2 and is essential for proper cell walls and pollen development. Probably involved in the formation of the pectocellulosic cell wall layer intine. Is probably active as heteromer in vivo. The sequence is that of UDP-arabinopyranose mutase 2 from Arabidopsis thaliana (Mouse-ear cress).